Reading from the N-terminus, the 350-residue chain is Transcription factor MYB102 (350 aa).

HTH myb-type domains lie at 9 to 65 (KNGL…RPDI) and 66 to 116 (KRGR…RKKL). 2 consecutive DNA-binding regions (H-T-H motif) follow at residues 37–61 (WRTL…TNYL) and 89–112 (WSAI…NTHI).

In terms of tissue distribution, expressed in rosette leaves, cauline leaves and flowers.

The protein resides in the nucleus. In terms of biological role, probable transcription factor that may function in osmotic stress and wounding signaling pathways. Contributes to basal resistance against the herbivore Pieris rapae (white cabbage butterfly) feeding. In Arabidopsis thaliana (Mouse-ear cress), this protein is Transcription factor MYB102.